A 320-amino-acid polypeptide reads, in one-letter code: HPr kinase/phosphorylase (320 aa).

Catalysis depends on residues His-141 and Lys-162. 156-163 (GHSGLGKS) is a binding site for ATP. Residue Ser-163 coordinates Mg(2+). The active-site Proton acceptor; for phosphorylation activity. Proton donor; for dephosphorylation activity is Asp-180. Residues 204–213 (LEVRGLGILN) form an important for the catalytic mechanism of both phosphorylation and dephosphorylation region. Glu-205 provides a ligand contact to Mg(2+). The active site involves Arg-248. Positions 269 to 274 (PVAVGR) are important for the catalytic mechanism of dephosphorylation.

This sequence belongs to the HPrK/P family. Homohexamer. Mg(2+) is required as a cofactor.

The enzyme catalyses [HPr protein]-L-serine + ATP = [HPr protein]-O-phospho-L-serine + ADP + H(+). It catalyses the reaction [HPr protein]-O-phospho-L-serine + phosphate + H(+) = [HPr protein]-L-serine + diphosphate. Catalyzes the ATP- as well as the pyrophosphate-dependent phosphorylation of a specific serine residue in HPr, a phosphocarrier protein of the phosphoenolpyruvate-dependent sugar phosphotransferase system (PTS). HprK/P also catalyzes the pyrophosphate-producing, inorganic phosphate-dependent dephosphorylation (phosphorolysis) of seryl-phosphorylated HPr (P-Ser-HPr). This is HPr kinase/phosphorylase from Neisseria gonorrhoeae (strain ATCC 700825 / FA 1090).